Reading from the N-terminus, the 340-residue chain is Anthranilate phosphoribosyltransferase (340 aa).

Residues Gly78, 81-82 (GD), Thr86, 88-91 (NIST), 106-114 (KHGNRSVSS), and Ser118 each bind 5-phospho-alpha-D-ribose 1-diphosphate. Gly78 lines the anthranilate pocket. Ser90 is a binding site for Mg(2+). Residue Asn109 coordinates anthranilate. An anthranilate-binding site is contributed by Arg164. Mg(2+) is bound by residues Asp223 and Glu224.

It belongs to the anthranilate phosphoribosyltransferase family. Homodimer. The cofactor is Mg(2+).

The enzyme catalyses N-(5-phospho-beta-D-ribosyl)anthranilate + diphosphate = 5-phospho-alpha-D-ribose 1-diphosphate + anthranilate. It participates in amino-acid biosynthesis; L-tryptophan biosynthesis; L-tryptophan from chorismate: step 2/5. Catalyzes the transfer of the phosphoribosyl group of 5-phosphorylribose-1-pyrophosphate (PRPP) to anthranilate to yield N-(5'-phosphoribosyl)-anthranilate (PRA). The protein is Anthranilate phosphoribosyltransferase of Bacillus pumilus (Bacillus mesentericus).